A 425-amino-acid polypeptide reads, in one-letter code: Serine--tRNA ligase (425 aa).

Residue 232–234 (TSE) participates in L-serine binding. Residues 263 to 265 (RRE) and valine 279 each bind ATP. Residue glutamate 286 participates in L-serine binding. 350-353 (EAVS) serves as a coordination point for ATP. Threonine 387 is an L-serine binding site.

Belongs to the class-II aminoacyl-tRNA synthetase family. Type-1 seryl-tRNA synthetase subfamily. Homodimer. The tRNA molecule binds across the dimer.

It localises to the cytoplasm. The enzyme catalyses tRNA(Ser) + L-serine + ATP = L-seryl-tRNA(Ser) + AMP + diphosphate + H(+). The catalysed reaction is tRNA(Sec) + L-serine + ATP = L-seryl-tRNA(Sec) + AMP + diphosphate + H(+). The protein operates within aminoacyl-tRNA biosynthesis; selenocysteinyl-tRNA(Sec) biosynthesis; L-seryl-tRNA(Sec) from L-serine and tRNA(Sec): step 1/1. Functionally, catalyzes the attachment of serine to tRNA(Ser). Is also able to aminoacylate tRNA(Sec) with serine, to form the misacylated tRNA L-seryl-tRNA(Sec), which will be further converted into selenocysteinyl-tRNA(Sec). In Methanoculleus marisnigri (strain ATCC 35101 / DSM 1498 / JR1), this protein is Serine--tRNA ligase.